The chain runs to 229 residues: Large ribosomal subunit protein uL1 (229 aa).

This sequence belongs to the universal ribosomal protein uL1 family. Part of the 50S ribosomal subunit.

Functionally, binds directly to 23S rRNA. The L1 stalk is quite mobile in the ribosome, and is involved in E site tRNA release. Protein L1 is also a translational repressor protein, it controls the translation of the L11 operon by binding to its mRNA. This Rhodopseudomonas palustris (strain TIE-1) protein is Large ribosomal subunit protein uL1.